The primary structure comprises 122 residues: Large ribosomal subunit protein uL14 (122 aa).

This sequence belongs to the universal ribosomal protein uL14 family. Part of the 50S ribosomal subunit. Forms a cluster with proteins L3 and L19. In the 70S ribosome, L14 and L19 interact and together make contacts with the 16S rRNA in bridges B5 and B8.

In terms of biological role, binds to 23S rRNA. Forms part of two intersubunit bridges in the 70S ribosome. In Variovorax paradoxus (strain S110), this protein is Large ribosomal subunit protein uL14.